Here is a 126-residue protein sequence, read N- to C-terminus: Aspartate 1-decarboxylase (126 aa).

The active-site Schiff-base intermediate with substrate; via pyruvic acid is the Ser-25. Ser-25 carries the pyruvic acid (Ser) modification. Thr-57 is a binding site for substrate. The active-site Proton donor is Tyr-58. Substrate is bound at residue 73-75; it reads GAA.

This sequence belongs to the PanD family. As to quaternary structure, heterooctamer of four alpha and four beta subunits. Pyruvate serves as cofactor. Post-translationally, is synthesized initially as an inactive proenzyme, which is activated by self-cleavage at a specific serine bond to produce a beta-subunit with a hydroxyl group at its C-terminus and an alpha-subunit with a pyruvoyl group at its N-terminus.

The protein localises to the cytoplasm. It carries out the reaction L-aspartate + H(+) = beta-alanine + CO2. It functions in the pathway cofactor biosynthesis; (R)-pantothenate biosynthesis; beta-alanine from L-aspartate: step 1/1. In terms of biological role, catalyzes the pyruvoyl-dependent decarboxylation of aspartate to produce beta-alanine. This chain is Aspartate 1-decarboxylase, found in Pectobacterium carotovorum subsp. carotovorum (strain PC1).